We begin with the raw amino-acid sequence, 178 residues long: CDP-archaeol synthase (178 aa).

A run of 5 helical transmembrane segments spans residues 7–27 (LFVS…ACIF), 56–76 (FFGV…SNLG), 91–111 (VIIG…GSFL), 125–145 (VLDQ…YYLV), and 149–169 (ISIT…IIAY).

This sequence belongs to the CDP-archaeol synthase family. The cofactor is Mg(2+).

The protein localises to the cell membrane. The catalysed reaction is 2,3-bis-O-(geranylgeranyl)-sn-glycerol 1-phosphate + CTP + H(+) = CDP-2,3-bis-O-(geranylgeranyl)-sn-glycerol + diphosphate. Its pathway is membrane lipid metabolism; glycerophospholipid metabolism. Its function is as follows. Catalyzes the formation of CDP-2,3-bis-(O-geranylgeranyl)-sn-glycerol (CDP-archaeol) from 2,3-bis-(O-geranylgeranyl)-sn-glycerol 1-phosphate (DGGGP) and CTP. This reaction is the third ether-bond-formation step in the biosynthesis of archaeal membrane lipids. This Methanococcus vannielii (strain ATCC 35089 / DSM 1224 / JCM 13029 / OCM 148 / SB) protein is CDP-archaeol synthase.